The primary structure comprises 283 residues: MPQPYIFRTVELDNQSIRTAVRPGKPHLTPLLIFNGIGANLELVFPFIEALDPDLEVIAFDVPGVGGSSTPRHPYRFPGLAKLTARMLDYLDYGQVNVIGVSWGGALAQQFAHDYPERCKKLVLAATAAGAVMVPGKPKVLWMMASPRRYVQPSHVIRIAPTIYGGGFRRDPELAMQHASKVRSGGKMGYYWQLFAGLGWTSIHWLHKIQQPTLVLAGDDDPLIPLINMRLLAWRIPNAQLHIIDDGHLFLITRAEAVAPIIMKFLQQERQRAVMHPRPASGG.

The AB hydrolase-1 domain maps to 30–253; the sequence is PLLIFNGIGA…IDDGHLFLIT (224 aa). The Charge relay system role is filled by Ser-102.

This sequence belongs to the AB hydrolase superfamily. Lipase family.

Complements a mutant that does not degrade PHA; might be a lipase. The chain is Poly(3-hydroxyalkanoate) depolymerase from Ectopseudomonas oleovorans (Pseudomonas oleovorans).